A 719-amino-acid chain; its full sequence is DNA polymerase epsilon subunit B (719 aa).

The segment at 107-147 (SIPPKTKTYNNGGGKTTTIDRFLTKRPSPSDNDEGPLDQSI) is disordered.

This sequence belongs to the DNA polymerase epsilon subunit B family. In terms of assembly, heterotetramer. Consists of four subunits: POL2, DPB2, DPB3 and DPB4.

The protein resides in the nucleus. As accessory component of the DNA polymerase epsilon (DNA polymerase II) participates in chromosomal DNA replication. The chain is DNA polymerase epsilon subunit B (DPB2) from Candida glabrata (strain ATCC 2001 / BCRC 20586 / JCM 3761 / NBRC 0622 / NRRL Y-65 / CBS 138) (Yeast).